Here is a 649-residue protein sequence, read N- to C-terminus: Replication protein E1 (649 aa).

Residues 83 to 85 (KRK) carry the Nuclear localization signal motif. 3 positions are modified to phosphoserine; by host: serine 89, serine 93, and serine 107. The short motif at 106–115 (ISPRLDAIKL) is the Nuclear export signal element. Residues 146 to 188 (TQVEKHGDPENGGDGQERDTGRDIEGEGVEHREAEAVDDSTRE) are disordered. The span at 148-188 (VEKHGDPENGGDGQERDTGRDIEGEGVEHREAEAVDDSTRE) shows a compositional bias: basic and acidic residues. The DNA-binding region stretch occupies residues 187–353 (REHADTSGIL…QTVIEHSLAD (167 aa)). The 151-residue stretch at 452 to 602 (IEFIPFLSKL…FPFDRNGNAV (151 aa)) folds into the SF3 helicase domain. 478 to 485 (GPPDTGKS) provides a ligand contact to ATP. Lysine 559 participates in a covalent cross-link: Glycyl lysine isopeptide (Lys-Gly) (interchain with G-Cter in SUMO).

This sequence belongs to the papillomaviridae E1 protein family. In terms of assembly, can form hexamers. Interacts with E2 protein; this interaction increases E1 DNA binding specificity. Interacts with host DNA polymerase subunit POLA2. Interacts with host single stranded DNA-binding protein RPA1. Interacts with host TOP1; this interaction stimulates the enzymatic activity of TOP1. Phosphorylated. In terms of processing, sumoylated.

It localises to the host nucleus. The enzyme catalyses Couples ATP hydrolysis with the unwinding of duplex DNA by translocating in the 3'-5' direction.. It carries out the reaction ATP + H2O = ADP + phosphate + H(+). In terms of biological role, ATP-dependent DNA 3'-5' helicase required for initiation of viral DNA replication. It forms a complex with the viral E2 protein. The E1-E2 complex binds to the replication origin which contains binding sites for both proteins. During the initial step, a dimer of E1 interacts with a dimer of protein E2 leading to a complex that binds the viral origin of replication with high specificity. Then, a second dimer of E1 displaces the E2 dimer in an ATP-dependent manner to form the E1 tetramer. Following this, two E1 monomers are added to each half of the site, which results in the formation of two E1 trimers on the viral ori. Subsequently, two hexamers will be created. The double hexamer acts as a bi-directional helicase machinery and unwinds the viral DNA and then recruits the host DNA polymerase to start replication. The polypeptide is Replication protein E1 (Human papillomavirus 11).